The sequence spans 450 residues: Runt-related transcription factor 1 (450 aa).

The interval 1–25 (MRIPVDASTSRRFTPPSTALSPGKM) is disordered. Residues 7-20 (ASTSRRFTPPSTAL) show a composition bias toward polar residues. Thr-14 is modified (phosphothreonine). Ser-21 carries the post-translational modification Phosphoserine. Lys-24 and Lys-43 each carry N6-acetyllysine. One can recognise a Runt domain in the interval 50 to 178 (SMVEVLADHP…TVDGPREPRR (129 aa)). The tract at residues 80–84 (RCNKT) is interaction with DNA. Residues Asn-112, Glu-116, Arg-139, and Val-170 each coordinate chloride. 2 interaction with DNA regions span residues 135 to 143 (RFVGRSGRG) and 168 to 177 (ITVDGPREPR). Disordered regions lie at residues 170–195 (VDGP…LSFS) and 209–252 (MRVS…SPPW). Ser-193 and Ser-212 each carry phosphoserine. Polar residues predominate over residues 222 to 247 (PRASLNHSTAFNPQPQSQMQDARQIQ). Ser-249 carries the phosphoserine; by HIPK2 modification. Residues Ser-266 and Ser-267 each carry the phosphoserine modification. Thr-272 carries the phosphothreonine; by HIPK2 modification. Residue Ser-275 is modified to Phosphoserine; by HIPK2. An interaction with KAT6A region spans residues 290-369 (SSRLSTAPDL…SQAQAGPFQT (80 aa)). Thr-295 is modified (phosphothreonine). The segment at 306–398 (RQFPTLPSIS…MVGGERSPPR (93 aa)) is interaction with KAT6B. The interaction with FOXP3 stretch occupies residues 360 to 400 (SQAQAGPFQTGSPSYHLYYGTSAGSYQFSMVGGERSPPRIL). Positions 410–450 (AALLNPSLPSQSDVVETEGSHSNSPTNMPPARLEEAVWRPY) are disordered. Residues 416 to 435 (SLPSQSDVVETEGSHSNSPT) are compositionally biased toward polar residues. Ser-433 carries the post-translational modification Phosphoserine. The span at 441–450 (RLEEAVWRPY) shows a compositional bias: basic and acidic residues.

In terms of assembly, heterodimer with CBFB. RUNX1 binds DNA as a monomer and through the Runt domain. DNA-binding is increased by heterodimerization. Interacts with TLE1 and ALYREF/THOC4. Interacts with ELF1, ELF2 and SPI1. Interacts via its Runt domain with the ELF4 N-terminal region. Interaction with ELF2 isoform 2 (NERF-1a) may act to repress RUNX1-mediated transactivation. Interacts with KAT6A and KAT6B. Interacts with SUV39H1, leading to abrogation of transactivating and DNA-binding properties of RUNX1. Interacts with YAP1 and HIPK2. Interaction with CDK6 prevents myeloid differentiation, reducing its transcription transactivation activity. Found in a complex with PRMT5, RUNX1 and CBFB. Interacts with FOXP3. Interacts with TBX21. Interacts with DPF2. Phosphorylated in its C-terminus upon IL-6 treatment. Phosphorylation enhances interaction with KAT6A. Post-translationally, methylated. In terms of processing, phosphorylated in Ser-249 Thr-272 and Ser-275 by HIPK2 when associated with CBFB and DNA. This phosphorylation promotes subsequent EP300 phosphorylation. In terms of tissue distribution, expressed in skeletal muscle.

The protein resides in the nucleus. Functionally, CBF binds to the core site, 5'-PYGPYGGT-3', of a number of enhancers and promoters, including murine leukemia virus, polyomavirus enhancer, T-cell receptor enhancers, LCK, IL-3 and GM-CSF promoters. The alpha subunit binds DNA and appears to have a role in the development of normal hematopoiesis. Isoform AML-1L interferes with the transactivation activity of RUNX1. Acts synergistically with ELF4 to transactivate the IL-3 promoter and with ELF2 to transactivate the BLK promoter. Inhibits KAT6B-dependent transcriptional activation. Controls the anergy and suppressive function of regulatory T-cells (Treg) by associating with FOXP3. Activates the expression of IL2 and IFNG and down-regulates the expression of TNFRSF18, IL2RA and CTLA4, in conventional T-cells. Positively regulates the expression of RORC in T-helper 17 cells. The protein is Runt-related transcription factor 1 (Runx1) of Rattus norvegicus (Rat).